Consider the following 224-residue polypeptide: Phosphoribosylformylglycinamidine synthase subunit PurQ (224 aa).

The 222-residue stretch at 3–224 (FGVVVFPGSN…GLLEKVVALA (222 aa)) folds into the Glutamine amidotransferase type-1 domain. The Nucleophile role is filled by C86. Catalysis depends on residues H195 and E197.

In terms of assembly, part of the FGAM synthase complex composed of 1 PurL, 1 PurQ and 2 PurS subunits.

The protein localises to the cytoplasm. The enzyme catalyses N(2)-formyl-N(1)-(5-phospho-beta-D-ribosyl)glycinamide + L-glutamine + ATP + H2O = 2-formamido-N(1)-(5-O-phospho-beta-D-ribosyl)acetamidine + L-glutamate + ADP + phosphate + H(+). It carries out the reaction L-glutamine + H2O = L-glutamate + NH4(+). The protein operates within purine metabolism; IMP biosynthesis via de novo pathway; 5-amino-1-(5-phospho-D-ribosyl)imidazole from N(2)-formyl-N(1)-(5-phospho-D-ribosyl)glycinamide: step 1/2. Part of the phosphoribosylformylglycinamidine synthase complex involved in the purines biosynthetic pathway. Catalyzes the ATP-dependent conversion of formylglycinamide ribonucleotide (FGAR) and glutamine to yield formylglycinamidine ribonucleotide (FGAM) and glutamate. The FGAM synthase complex is composed of three subunits. PurQ produces an ammonia molecule by converting glutamine to glutamate. PurL transfers the ammonia molecule to FGAR to form FGAM in an ATP-dependent manner. PurS interacts with PurQ and PurL and is thought to assist in the transfer of the ammonia molecule from PurQ to PurL. The protein is Phosphoribosylformylglycinamidine synthase subunit PurQ of Nostoc sp. (strain PCC 7120 / SAG 25.82 / UTEX 2576).